Here is an 86-residue protein sequence, read N- to C-terminus: Toxin Tpa6 (86 aa).

The signal sequence occupies residues 1 to 20 (MSIFPIALALLLIGLEEGEA). The region spanning 22-85 (RDGYPLSKNN…WGDPGTKPCM (64 aa)) is the LCN-type CS-alpha/beta domain. Disulfide bonds link C33-C84, C37-C58, C43-C64, and C47-C66.

It belongs to the long (4 C-C) scorpion toxin superfamily. Sodium channel inhibitor family. Beta subfamily. In terms of tissue distribution, expressed by the venom gland.

Its subcellular location is the secreted. Beta toxins bind voltage-independently at site-4 of sodium channels (Nav) and shift the voltage of activation toward more negative potentials thereby affecting sodium channel activation and promoting spontaneous and repetitive firing. This is Toxin Tpa6 from Tityus pachyurus (Colombian scorpion).